The chain runs to 144 residues: Protein cornichon homolog 1 (144 aa).

Topologically, residues methionine 1–tyrosine 10 are cytoplasmic. A helical transmembrane segment spans residues methionine 11–phenylalanine 31. The Lumenal portion of the chain corresponds to aspartate 32 to tyrosine 56. Residues leucine 57–leucine 77 form a helical membrane-spanning segment. Over asparagine 78–lysine 122 the chain is Cytoplasmic. The helical transmembrane segment at leucine 123–serine 143 threads the bilayer. Position 144 (serine 144) is a topological domain, lumenal.

This sequence belongs to the cornichon family. Interacts with AREG immature precursor and with immature TGFA, i.e. with a prosegment and lacking full N-glycosylation, but not with the fully N-glycosylated form. In the Golgi apparatus, may form a complex with GORASP55 and transmembrane TGFA.

Its subcellular location is the endoplasmic reticulum membrane. It localises to the golgi apparatus membrane. In terms of biological role, involved in the selective transport and maturation of TGF-alpha family proteins. This is Protein cornichon homolog 1 (CNIH1) from Bos taurus (Bovine).